Here is a 333-residue protein sequence, read N- to C-terminus: Electron transfer flavoprotein subunit alpha, mitochondrial (333 aa).

The transit peptide at 1-19 (MFRAAAPGQLRRAASLLRF) directs the protein to the mitochondrion. Residues 20–204 (QSTLVIAEHA…GISEWLDQKL (185 aa)) form a domain I region. Lysine 59 bears the N6-acetyllysine; alternate mark. The residue at position 59 (lysine 59) is an N6-succinyllysine; alternate. At lysine 62 the chain carries N6-acetyllysine. An N6-acetyllysine; alternate modification is found at lysine 69. Lysine 69 carries the post-translational modification N6-succinyllysine; alternate. Position 75 is an N6-acetyllysine (lysine 75). An N6-acetyllysine; alternate modification is found at lysine 85. Lysine 85 carries the post-translational modification N6-succinyllysine; alternate. The residue at position 93 (threonine 93) is a Phosphothreonine. N6-acetyllysine is present on residues lysine 101 and lysine 139. Phosphoserine is present on serine 140. Position 158 is an N6-acetyllysine; alternate (lysine 158). N6-succinyllysine; alternate is present on lysine 158. Lysine 164 is modified (N6-acetyllysine). Lysine 187 bears the N6-succinyllysine mark. N6-acetyllysine; alternate is present on lysine 203. Lysine 203 carries the N6-succinyllysine; alternate modification. The segment at 205–333 (TKSDRPELTG…PEMTEILKKK (129 aa)) is domain II. An N6-succinyllysine modification is found at lysine 216. Arginine 223 provides a ligand contact to FAD. 2 positions are modified to N6-acetyllysine; alternate: lysine 226 and lysine 232. Residues lysine 226 and lysine 232 each carry the N6-succinyllysine; alternate modification. FAD-binding positions include serine 248, 263 to 266 (VGQT), 281 to 286 (SGAIQH), and asparagine 300. N6-succinyllysine is present on lysine 301. Position 318-319 (318-319 (DL)) interacts with FAD.

It belongs to the ETF alpha-subunit/FixB family. In terms of assembly, heterodimer composed of ETFA and ETFB. Identified in a complex that contains ETFA, ETFB and ETFRF1. Interaction with ETFRF1 promotes dissociation of the bound FAD and loss of electron transfer activity. Interacts with TASOR. FAD serves as cofactor. In terms of tissue distribution, expressed in the spermatogonia, spermatocytes, ovary and granular cells within the cerebellum.

It is found in the mitochondrion matrix. Heterodimeric electron transfer flavoprotein that accepts electrons from several mitochondrial dehydrogenases, including acyl-CoA dehydrogenases, glutaryl-CoA and sarcosine dehydrogenase. It transfers the electrons to the main mitochondrial respiratory chain via ETF-ubiquinone oxidoreductase (ETF dehydrogenase). Required for normal mitochondrial fatty acid oxidation and normal amino acid metabolism. In Mus musculus (Mouse), this protein is Electron transfer flavoprotein subunit alpha, mitochondrial (Etfa).